We begin with the raw amino-acid sequence, 271 residues long: Undecaprenyl-diphosphatase (271 aa).

A run of 8 helical transmembrane segments spans residues 5–25 (YALF…FLPV), 45–65 (AATF…AVFW), 86–106 (TLSL…GLAI), 114–134 (LFGP…LIIA), 149–169 (ISYK…WPGF), 189–209 (AAEF…GLDL), 226–246 (VGFI…LALI), and 251–271 (FIPF…VFVA).

The protein belongs to the UppP family.

The protein localises to the cell inner membrane. The catalysed reaction is di-trans,octa-cis-undecaprenyl diphosphate + H2O = di-trans,octa-cis-undecaprenyl phosphate + phosphate + H(+). Catalyzes the dephosphorylation of undecaprenyl diphosphate (UPP). Confers resistance to bacitracin. This chain is Undecaprenyl-diphosphatase, found in Aeromonas hydrophila subsp. hydrophila (strain ATCC 7966 / DSM 30187 / BCRC 13018 / CCUG 14551 / JCM 1027 / KCTC 2358 / NCIMB 9240 / NCTC 8049).